A 370-amino-acid chain; its full sequence is Arginine kinase (370 aa).

The region spanning 6 to 89 is the Phosphagen kinase N-terminal domain; sequence QKKYPAKDDF…FDPVIEEYHN (84 aa). The Phosphagen kinase C-terminal domain maps to 115 to 358; that stretch reads YVISSRVRTG…KVLIEMEKKL (244 aa). ATP-binding positions include 118–122 and His181; that span reads SSRVR. Glu222 lines the substrate pocket. An ATP-binding site is contributed by Arg226. Position 274 (Cys274) interacts with substrate. ATP-binding positions include 283–287 and 311–316; these read RCSVH and RGTSGE. Residue Glu316 participates in substrate binding.

Belongs to the ATP:guanido phosphotransferase family. In terms of assembly, homodimer. In terms of processing, the N-terminus is blocked.

It carries out the reaction L-arginine + ATP = N(omega)-phospho-L-arginine + ADP + H(+). This Stichopus japonicus (Sea cucumber) protein is Arginine kinase (AK).